Reading from the N-terminus, the 406-residue chain is Fosmidomycin resistance protein (406 aa).

Topologically, residues 1–42 are periplasmic; the sequence is MAMSEQPQPVAGAAASTTKARTSFGILGAISLSHLLNDMIQS. The next 2 helical transmembrane spans lie at 43–63 and 64–84; these read LILA…MQIG and MITL…GYWT. Topologically, residues 85-102 are periplasmic; the sequence is DKYPMPWSLPIGMCFTLS. The chain crosses the membrane as a helical span at residues 103–123; sequence GLVLLALAGSFGAVLLAAALV. Topologically, residues 124 to 151 are cytoplasmic; sequence GTGSSVFHPESSRVARMASGGRHGLAQS. The helical transmembrane segment at 152–172 threads the bilayer; the sequence is IFQVGGNFGSSLGPLLAAVII. Residues 173 to 177 are Periplasmic-facing; the sequence is APYGK. Residues 178–198 form a helical membrane-spanning segment; it reads GNVAWFVLAALLAIVVLAQIS. Residues 199–225 lie on the Cytoplasmic side of the membrane; that stretch reads RWYSAQHRMNKGKPKATIINPLPRNKV. A helical transmembrane segment spans residues 226–246; that stretch reads VLAVSILLILIFSKYFYMASI. Topologically, residues 247 to 266 are periplasmic; sequence SSYYTFYLMQKFGLSIQNAQ. The chain crosses the membrane as a helical span at residues 267–287; that stretch reads LHLFAFLFAVAAGTVIGGPVG. Residues 288-294 are Cytoplasmic-facing; that stretch reads DKIGRKY. A helical transmembrane segment spans residues 295–315; it reads VIWGSILGVAPFTLILPYASL. The Periplasmic portion of the chain corresponds to 316-319; the sequence is HWTG. The helical transmembrane segment at 320-340 threads the bilayer; it reads VLTVIIGFILASAFSAILVYA. Topologically, residues 341–353 are cytoplasmic; that stretch reads QELLPGRIGMVSG. A helical membrane pass occupies residues 354 to 374; that stretch reads LFFGFAFGMGGLGAAVLGLIA. Topologically, residues 375 to 378 are periplasmic; the sequence is DHTS. A helical transmembrane segment spans residues 379-399; the sequence is IELVYKICAFLPLLGMLTIFL. At 400–406 the chain is on the cytoplasmic side; that stretch reads PDNRHKD.

Belongs to the major facilitator superfamily.

It is found in the cell inner membrane. In terms of biological role, confers the resistance against fosmidomycin. The protein is Fosmidomycin resistance protein (fsr) of Escherichia coli (strain K12).